The chain runs to 429 residues: Serine--tRNA ligase (429 aa).

236 to 238 is an L-serine binding site; it reads TGE. 267 to 269 lines the ATP pocket; it reads RSE. E290 contacts L-serine. 354–357 contacts ATP; sequence EISS. Residue S390 participates in L-serine binding.

It belongs to the class-II aminoacyl-tRNA synthetase family. Type-1 seryl-tRNA synthetase subfamily. As to quaternary structure, homodimer. The tRNA molecule binds across the dimer.

The protein localises to the cytoplasm. It carries out the reaction tRNA(Ser) + L-serine + ATP = L-seryl-tRNA(Ser) + AMP + diphosphate + H(+). The enzyme catalyses tRNA(Sec) + L-serine + ATP = L-seryl-tRNA(Sec) + AMP + diphosphate + H(+). The protein operates within aminoacyl-tRNA biosynthesis; selenocysteinyl-tRNA(Sec) biosynthesis; L-seryl-tRNA(Sec) from L-serine and tRNA(Sec): step 1/1. Functionally, catalyzes the attachment of serine to tRNA(Ser). Is also able to aminoacylate tRNA(Sec) with serine, to form the misacylated tRNA L-seryl-tRNA(Sec), which will be further converted into selenocysteinyl-tRNA(Sec). The sequence is that of Serine--tRNA ligase from Vesicomyosocius okutanii subsp. Calyptogena okutanii (strain HA).